The sequence spans 491 residues: Glutamyl-tRNA(Gln) amidotransferase subunit A (491 aa).

Active-site charge relay system residues include Lys-78 and Ser-158. The active-site Acyl-ester intermediate is Ser-182.

It belongs to the amidase family. GatA subfamily. Heterotrimer of A, B and C subunits.

The catalysed reaction is L-glutamyl-tRNA(Gln) + L-glutamine + ATP + H2O = L-glutaminyl-tRNA(Gln) + L-glutamate + ADP + phosphate + H(+). Functionally, allows the formation of correctly charged Gln-tRNA(Gln) through the transamidation of misacylated Glu-tRNA(Gln) in organisms which lack glutaminyl-tRNA synthetase. The reaction takes place in the presence of glutamine and ATP through an activated gamma-phospho-Glu-tRNA(Gln). This chain is Glutamyl-tRNA(Gln) amidotransferase subunit A, found in Afipia carboxidovorans (strain ATCC 49405 / DSM 1227 / KCTC 32145 / OM5) (Oligotropha carboxidovorans).